The chain runs to 737 residues: Phosphoribosylformylglycinamidine synthase subunit PurL (737 aa).

His-50 is an active-site residue. ATP contacts are provided by Tyr-53 and Lys-92. Glu-94 provides a ligand contact to Mg(2+). Substrate is bound by residues 95–98 (SHNH) and Arg-117. His-96 functions as the Proton acceptor in the catalytic mechanism. Asp-118 serves as a coordination point for Mg(2+). Gln-241 is a binding site for substrate. Asp-269 contributes to the Mg(2+) binding site. Position 313–315 (313–315 (ESQ)) interacts with substrate. Residues Asp-494 and Gly-531 each coordinate ATP. Asn-532 lines the Mg(2+) pocket. Ser-534 provides a ligand contact to substrate.

It belongs to the FGAMS family. As to quaternary structure, monomer. Part of the FGAM synthase complex composed of 1 PurL, 1 PurQ and 2 PurS subunits.

It localises to the cytoplasm. The catalysed reaction is N(2)-formyl-N(1)-(5-phospho-beta-D-ribosyl)glycinamide + L-glutamine + ATP + H2O = 2-formamido-N(1)-(5-O-phospho-beta-D-ribosyl)acetamidine + L-glutamate + ADP + phosphate + H(+). Its pathway is purine metabolism; IMP biosynthesis via de novo pathway; 5-amino-1-(5-phospho-D-ribosyl)imidazole from N(2)-formyl-N(1)-(5-phospho-D-ribosyl)glycinamide: step 1/2. Functionally, part of the phosphoribosylformylglycinamidine synthase complex involved in the purines biosynthetic pathway. Catalyzes the ATP-dependent conversion of formylglycinamide ribonucleotide (FGAR) and glutamine to yield formylglycinamidine ribonucleotide (FGAM) and glutamate. The FGAM synthase complex is composed of three subunits. PurQ produces an ammonia molecule by converting glutamine to glutamate. PurL transfers the ammonia molecule to FGAR to form FGAM in an ATP-dependent manner. PurS interacts with PurQ and PurL and is thought to assist in the transfer of the ammonia molecule from PurQ to PurL. The sequence is that of Phosphoribosylformylglycinamidine synthase subunit PurL from Rhodopseudomonas palustris (strain BisA53).